Here is a 277-residue protein sequence, read N- to C-terminus: 2,3,4,5-tetrahydropyridine-2,6-dicarboxylate N-succinyltransferase (277 aa).

Residues Arg106 and Asp143 each contribute to the substrate site.

Belongs to the transferase hexapeptide repeat family. In terms of assembly, homotrimer.

The protein resides in the cytoplasm. It carries out the reaction (S)-2,3,4,5-tetrahydrodipicolinate + succinyl-CoA + H2O = (S)-2-succinylamino-6-oxoheptanedioate + CoA. It participates in amino-acid biosynthesis; L-lysine biosynthesis via DAP pathway; LL-2,6-diaminopimelate from (S)-tetrahydrodipicolinate (succinylase route): step 1/3. The chain is 2,3,4,5-tetrahydropyridine-2,6-dicarboxylate N-succinyltransferase from Xylella fastidiosa (strain 9a5c).